The chain runs to 196 residues: uncharacterized protein (196 aa).

2 consecutive CBS domains span residues 10–69 (ARRD…NPDE) and 76–132 (MSQP…LVAT). In terms of domain architecture, ACP-type MB spans 153–187 (IIEGVCDLCETYSEELRFVDGVWVCPECYEDILGR). The Fe cation site is built by Cys158, Cys161, Cys177, and Cys180. Zn(2+) contacts are provided by Cys158, Cys161, Cys177, and Cys180.

This is an uncharacterized protein from Methanopyrus kandleri (strain AV19 / DSM 6324 / JCM 9639 / NBRC 100938).